We begin with the raw amino-acid sequence, 130 residues long: Large ribosomal subunit protein bL12c (130 aa).

It belongs to the bacterial ribosomal protein bL12 family. As to quaternary structure, homodimer. Part of the ribosomal stalk of the 50S ribosomal subunit. Forms a multimeric L10(L12)X complex, where L10 forms an elongated spine to which 2 to 4 L12 dimers bind in a sequential fashion. Binds GTP-bound translation factors.

The protein resides in the plastid. Its function is as follows. Forms part of the ribosomal stalk which helps the ribosome interact with GTP-bound translation factors. Is thus essential for accurate translation. This is Large ribosomal subunit protein bL12c from Prototheca wickerhamii.